The sequence spans 116 residues: Sperm mitochondrial-associated cysteine-rich protein (116 aa).

7 tandem repeats follow at residues 6 to 13, 14 to 21, 30 to 37, 38 to 45, 46 to 53, 54 to 61, and 62 to 68. The interval 6 to 68 is 7 X 7 (OR 8) AA approximate repeats; that stretch reads KHSKCCPAKG…CQPKPPCCIQ (63 aa). A disordered region spans residues 80-116; the sequence is VSPLNMESEPNSPQTQDKGCQTQQQPHSPQNESRPSK. The span at 93–104 shows a compositional bias: low complexity; it reads QTQDKGCQTQQQ. Polar residues predominate over residues 105–116; the sequence is PHSPQNESRPSK.

Testis. Is selectively expressed in the spermatids of seminiferous tubules.

It localises to the cytoplasm. The protein localises to the mitochondrion membrane. Functionally, involved in sperm motility. Its absence is associated with genetic background dependent male infertility. Infertility may be due to reduced sperm motility in the female reproductive tract and inability to penetrate the oocyte zona pellucida. The sequence is that of Sperm mitochondrial-associated cysteine-rich protein (SMCP) from Homo sapiens (Human).